The primary structure comprises 85 residues: U4-theraphotoxin-Hhn1ad (85 aa).

Positions 1 to 22 (MKVTLIAILTCAAVLVLHTTAA) are cleaved as a signal peptide. Positions 23–48 (EELKTESQLMEVGMPDTELATVDEER) are excised as a propeptide. Cystine bridges form between cysteine 52-cysteine 66, cysteine 56-cysteine 77, and cysteine 71-cysteine 82.

This sequence belongs to the neurotoxin 12 (Hwtx-2) family. 02 (Hwtx-2) subfamily. As to expression, expressed by the venom gland.

It localises to the secreted. Functionally, postsynaptic neurotoxin. The protein is U4-theraphotoxin-Hhn1ad of Cyriopagopus hainanus (Chinese bird spider).